Reading from the N-terminus, the 334-residue chain is MLIFISNMEELLIENSQRFTIFPIQHPECWNWYKKLESLTWTAQEVDMCKDIDDWEAMPKPQREFYKQILAFFVVADEIVIENLLTNFMREIKVKEVLYFYTMQAAQECVHSEAYSIQVKTLIPDEKEQQRIFSGIEKHPIIKKMAQWVRQWMDPDRNTLGERLVGFAAVEGILFQNHFVAIQFLKEQNIMPGLVSYNEFISRDEGVHCSFACFLISNYVYNIPEEKIIHKILKEAVELVDEFINYAFDKARGRVPGFSKEMLFQYIRYFTDNLCFMMQCKSIYKVGNPFPQMTKFFLNEVEKTNFFELRPTQYQNCVKDDAFAFKLFLNDDDF.

Fe cation-binding residues include aspartate 77, glutamate 108, and histidine 111. Residue tyrosine 115 is part of the active site. The Fe cation site is built by glutamate 171, glutamate 205, and histidine 208.

Belongs to the ribonucleoside diphosphate reductase small chain family. As to quaternary structure, heterotetramer composed of a homodimer of the large subunit (R1) and a homodimer of the small subunit (R2). Larger multisubunit protein complex are also active, composed of (R1)n(R2)n. It depends on Fe cation as a cofactor.

The enzyme catalyses a 2'-deoxyribonucleoside 5'-diphosphate + [thioredoxin]-disulfide + H2O = a ribonucleoside 5'-diphosphate + [thioredoxin]-dithiol. Functionally, ribonucleoside-diphosphate reductase holoenzyme provides the precursors necessary for viral DNA synthesis. Allows virus growth in non-dividing cells. Catalyzes the biosynthesis of deoxyribonucleotides from the corresponding ribonucleotides. The chain is Ribonucleoside-diphosphate reductase small chain from Ornithodoros (relapsing fever ticks).